A 449-amino-acid chain; its full sequence is Trigger factor (449 aa).

Positions 169–254 constitute a PPIase FKBP-type domain; the sequence is GDRITVDFVG…AKQVEAPGEL (86 aa).

This sequence belongs to the FKBP-type PPIase family. Tig subfamily.

The protein resides in the cytoplasm. The catalysed reaction is [protein]-peptidylproline (omega=180) = [protein]-peptidylproline (omega=0). Functionally, involved in protein export. Acts as a chaperone by maintaining the newly synthesized protein in an open conformation. Functions as a peptidyl-prolyl cis-trans isomerase. In Azorhizobium caulinodans (strain ATCC 43989 / DSM 5975 / JCM 20966 / LMG 6465 / NBRC 14845 / NCIMB 13405 / ORS 571), this protein is Trigger factor.